Here is a 157-residue protein sequence, read N- to C-terminus: MNIRKFIPSLALMLIFFAFANLVLSDANDKAKKPAGKGSPSTLQTPGSSSGASLHAVGPNQGGLSQGLSGKDSADKMPLETQLAIEEIKSLSNMLDKKTTVNRNLIISTAVTNMIMLIILSGIVGFKVKKTKNADDDKGDKDKDKDNTDEGDEGDDS.

A signal peptide spans 1 to 25 (MNIRKFIPSLALMLIFFAFANLVLS). The Extracellular portion of the chain corresponds to 26-105 (DANDKAKKPA…DKKTTVNRNL (80 aa)). The interval 30 to 74 (KAKKPAGKGSPSTLQTPGSSSGASLHAVGPNQGGLSQGLSGKDSA) is disordered. Residues 39-52 (SPSTLQTPGSSSGA) are compositionally biased toward polar residues. The chain crosses the membrane as a helical span at residues 106–126 (IISTAVTNMIMLIILSGIVGF). The Cytoplasmic portion of the chain corresponds to 127-157 (KVKKTKNADDDKGDKDKDKDNTDEGDEGDDS). A disordered region spans residues 130–157 (KTKNADDDKGDKDKDKDNTDEGDEGDDS). Basic and acidic residues predominate over residues 132 to 148 (KNADDDKGDKDKDKDNT).

The protein resides in the parasitophorous vacuole membrane. The protein localises to the vacuole. Functionally, involved in male gametogenesis. Required for exflagellation of male gametocytes. May play a role in parasite transmission in the mosquito. Binds to the mosquito vector midgut. This Plasmodium falciparum (isolate 3D7) protein is Parasitophorous vacuole membrane protein S16.